A 404-amino-acid chain; its full sequence is S-adenosylmethionine synthase (404 aa).

Histidine 18 contacts ATP. Mg(2+) is bound at residue aspartate 20. Glutamate 46 serves as a coordination point for K(+). L-methionine contacts are provided by glutamate 59 and glutamine 102. A flexible loop region spans residues 102–112 (QSPEIAQGVDH). ATP-binding positions include 178 to 180 (DGK), 249 to 250 (KF), aspartate 258, 264 to 265 (RK), alanine 281, and lysine 285. Residue aspartate 258 coordinates L-methionine. Lysine 289 lines the L-methionine pocket.

Belongs to the AdoMet synthase family. In terms of assembly, homotetramer; dimer of dimers. Mg(2+) is required as a cofactor. It depends on K(+) as a cofactor.

The protein resides in the cytoplasm. The catalysed reaction is L-methionine + ATP + H2O = S-adenosyl-L-methionine + phosphate + diphosphate. It functions in the pathway amino-acid biosynthesis; S-adenosyl-L-methionine biosynthesis; S-adenosyl-L-methionine from L-methionine: step 1/1. In terms of biological role, catalyzes the formation of S-adenosylmethionine (AdoMet) from methionine and ATP. The overall synthetic reaction is composed of two sequential steps, AdoMet formation and the subsequent tripolyphosphate hydrolysis which occurs prior to release of AdoMet from the enzyme. This Rhodococcus opacus (strain B4) protein is S-adenosylmethionine synthase.